The primary structure comprises 71 residues: Disintegrin viridin (71 aa).

The Disintegrin domain maps to 1–71 (AGEECDCGSP…SADCPRNRFH (71 aa)). 6 cysteine pairs are disulfide-bonded: C5-C20, C7-C15, C14-C37, C28-C34, C33-C58, and C46-C65. The short motif at 50 to 52 (RGD) is the Cell attachment site element. Residues 50-71 (RGDNPDDRCTGQSADCPRNRFH) are disordered.

It belongs to the venom metalloproteinase (M12B) family. P-II subfamily. P-IIa sub-subfamily. Monomer (disintegrin). Expressed by the venom gland.

It localises to the secreted. In terms of biological role, inhibits fibrinogen interaction with platelets. Acts by binding to alpha-IIb/beta-3 (ITGA2B/ITGB3) on the platelet surface and inhibits aggregation induced by ADP, thrombin, platelet-activating factor and collagen. In Crotalus viridis viridis (Prairie rattlesnake), this protein is Disintegrin viridin.